Here is a 547-residue protein sequence, read N- to C-terminus: Apolipoprotein N-acyltransferase (547 aa).

5 helical membrane-spanning segments follow: residues 31–51, 71–91, 106–126, 180–200, and 210–230; these read ILSG…ALIF, FWAG…WIAY, LALL…VAAG, LVGF…MGYV, and ALSH…WGFW. The region spanning 247–515 is the CN hydrolase domain; that stretch reads VQANIGNLEK…KYLKNAPLTF (269 aa). The active-site Proton acceptor is the Glu-294. Lys-364 is an active-site residue. The Nucleophile role is filled by Cys-418. Residues 515-535 traverse the membrane as a helical segment; the sequence is FFVQWGHWDWIVILLVLGAVI.

Belongs to the CN hydrolase family. Apolipoprotein N-acyltransferase subfamily.

The protein resides in the cell inner membrane. The catalysed reaction is N-terminal S-1,2-diacyl-sn-glyceryl-L-cysteinyl-[lipoprotein] + a glycerophospholipid = N-acyl-S-1,2-diacyl-sn-glyceryl-L-cysteinyl-[lipoprotein] + a 2-acyl-sn-glycero-3-phospholipid + H(+). The protein operates within protein modification; lipoprotein biosynthesis (N-acyl transfer). Functionally, catalyzes the phospholipid dependent N-acylation of the N-terminal cysteine of apolipoprotein, the last step in lipoprotein maturation. This is Apolipoprotein N-acyltransferase from Bdellovibrio bacteriovorus (strain ATCC 15356 / DSM 50701 / NCIMB 9529 / HD100).